A 448-amino-acid chain; its full sequence is Ribosome biogenesis protein YTM1 (448 aa).

Positions 5-86 are ubiquitin-like (UBL) domain; sequence TSNQAVVFST…EETLEIEYIE (82 aa). WD repeat units lie at residues 98–136, 191–230, 271–309, 312–351, 357–397, and 403–439; these read PHES…TLDA, LHTA…KHEV, SHIG…CTRT, ASEK…ALSA, LHPA…AAIS, and DGTK…ETQG. The segment at 225–261 is disordered; the sequence is PPKHEVPEPTITAADQRTKKRRKVDPSSGDSSSPTAI.

Belongs to the WD repeat WDR12/YTM1 family. As to quaternary structure, component of the NOP7 complex, composed of ERB1, NOP7 and YTM1. The complex is held together by ERB1, which interacts with NOP7 via its N-terminal domain and with YTM1 via a high-affinity interaction between the seven-bladed beta-propeller domains of the 2 proteins. The NOP7 complex associates with the 66S pre-ribosome. Interacts (via UBL domain) with MDN1 (via VWFA/MIDAS domain).

It is found in the nucleus. The protein localises to the nucleolus. Its subcellular location is the nucleoplasm. Functionally, component of the NOP7 complex, which is required for maturation of the 25S and 5.8S ribosomal RNAs and formation of the 60S ribosome. The protein is Ribosome biogenesis protein YTM1 of Coprinopsis cinerea (strain Okayama-7 / 130 / ATCC MYA-4618 / FGSC 9003) (Inky cap fungus).